A 241-amino-acid chain; its full sequence is Uridylate kinase (241 aa).

15–18 (KISG) is an ATP binding site. The tract at residues 23–28 (GDQGFG) is involved in allosteric activation by GTP. Position 57 (G57) interacts with UMP. ATP is bound by residues G58 and R62. Residues D77 and 138–145 (TGNPYFTT) each bind UMP. ATP is bound by residues T165, Y171, and D174.

It belongs to the UMP kinase family. Homohexamer.

It localises to the cytoplasm. The catalysed reaction is UMP + ATP = UDP + ADP. The protein operates within pyrimidine metabolism; CTP biosynthesis via de novo pathway; UDP from UMP (UMPK route): step 1/1. With respect to regulation, allosterically activated by GTP. Inhibited by UTP. Its function is as follows. Catalyzes the reversible phosphorylation of UMP to UDP. This Paracoccus zeaxanthinifaciens protein is Uridylate kinase.